A 211-amino-acid polypeptide reads, in one-letter code: Chaperone protein TorD (211 aa).

The protein belongs to the TorD/DmsD family. TorD subfamily.

It localises to the cytoplasm. Its function is as follows. Involved in the biogenesis of TorA. Acts on TorA before the insertion of the molybdenum cofactor and, as a result, probably favors a conformation of the apoenzyme that is competent for acquiring the cofactor. In Shewanella loihica (strain ATCC BAA-1088 / PV-4), this protein is Chaperone protein TorD.